The chain runs to 376 residues: Ribonucleoside-diphosphate reductase 1 subunit beta (376 aa).

Fe cation is bound by residues aspartate 85, glutamate 116, and histidine 119. Tyrosine 123 is an active-site residue. Fe cation is bound by residues glutamate 205, glutamate 239, and histidine 242.

The protein belongs to the ribonucleoside diphosphate reductase small chain family. Tetramer of two alpha (R1) and two beta (R2) subunits. The B1 protein is a dimer of alpha subunits. A radical transfer pathway occurs between Tyr-123 of R2 and R1. Fe cation serves as cofactor.

The enzyme catalyses a 2'-deoxyribonucleoside 5'-diphosphate + [thioredoxin]-disulfide + H2O = a ribonucleoside 5'-diphosphate + [thioredoxin]-dithiol. Functionally, provides the precursors necessary for DNA synthesis. Catalyzes the biosynthesis of deoxyribonucleotides from the corresponding ribonucleotides. R2 contains the tyrosyl radical required for catalysis. This Salmonella typhimurium (strain LT2 / SGSC1412 / ATCC 700720) protein is Ribonucleoside-diphosphate reductase 1 subunit beta (nrdB).